We begin with the raw amino-acid sequence, 151 residues long: Glycosylation-dependent cell adhesion molecule 1 (151 aa).

The signal sequence occupies residues Met1–Leu19. A disordered region spans residues Met29–Val123. Low complexity predominate over residues Ser42–Ser52. A compositionally biased stretch (basic and acidic residues) spans Thr53–Ser71. Phosphoserine is present on residues Ser54, Ser59, Ser63, and Ser71. Positions Arg103–Glu114 are enriched in low complexity. Asn115 carries an N-linked (GlcNAc...) asparagine glycan.

Belongs to the PP3/GlyCAM-1 family. In terms of processing, extensively O-glycosylated. Lymph nodes. Associated with the lumenal surface of the high endothelial venules of peripheral lymph nodes.

The protein localises to the cell membrane. Functionally, adhesion molecule that accomplishes cell binding by presenting carbohydrate(s) to the lectin domain of L-selectin. This Mus musculus (Mouse) protein is Glycosylation-dependent cell adhesion molecule 1 (Glycam1).